The sequence spans 147 residues: Ribonuclease 4 (147 aa).

The N-terminal stretch at 1–28 (MALQRTQAFLLLLLLTLLGLGLVQPSYG) is a signal peptide. Gln29 is subject to Pyrrolidone carboxylic acid. Positions 35, 40, 68, 71, and 72 each coordinate dUMP. The active-site Proton acceptor is the His40. 4 disulfide bridges follow: Cys53–Cys109, Cys67–Cys120, Cys85–Cys135, and Cys92–Cys99. The active-site Proton donor is the His144. Phe145 provides a ligand contact to dUMP.

The protein belongs to the pancreatic ribonuclease family.

It localises to the secreted. Cleaves preferentially after uridine bases. Has antimicrobial activity against uropathogenic E.coli (UPEC). Probably contributes to urinary tract sterility. This chain is Ribonuclease 4 (RNASE4), found in Bos taurus (Bovine).